We begin with the raw amino-acid sequence, 406 residues long: NIPA-like protein 3 (406 aa).

The next 4 helical transmembrane spans lie at 33–53, 76–96, 101–121, and 135–155; these read NLIGALLAIFGHLVVSIALNL, WWLGLFLMLLGELGVFASYAF, LIVPLSAVSVIASAIIGIIFI, and ILSFVGCGLAVVGTYLLVTFA. Asn-166 is a glycosylation site (N-linked (GlcNAc...) asparagine). The next 5 membrane-spanning stretches (helical) occupy residues 171-191, 202-222, 240-260, 271-291, and 300-320; these read LVSWPFLLYMLVEIILFCLLL, IVVILLLVALLGSMTVVTVKA, PIFYVMFVCMVATAVYQAAFL, LIASVGYILSTTIAITAGAIF, and VLHICMFALGCLIAFLGVFLI. Ser-372 bears the Phosphoserine mark.

The protein belongs to the NIPA family.

The protein localises to the membrane. The sequence is that of NIPA-like protein 3 (NIPAL3) from Pongo abelii (Sumatran orangutan).